Consider the following 238-residue polypeptide: N-terminal acetyltransferase A complex catalytic subunit ARD1 (238 aa).

The 161-residue stretch at 35 to 195 (YHILSWPEAS…DAYAMKKVLK (161 aa)) folds into the N-acetyltransferase domain.

This sequence belongs to the acetyltransferase family. ARD1 subfamily. In terms of assembly, component of the N-terminal acetyltransferase A (NatA) complex, which is composed of ARD1, NAT1 and NAT5. Can self-associate.

It localises to the cytoplasm. It carries out the reaction N-terminal glycyl-[protein] + acetyl-CoA = N-terminal N(alpha)-acetylglycyl-[protein] + CoA + H(+). The enzyme catalyses N-terminal L-alanyl-[protein] + acetyl-CoA = N-terminal N(alpha)-acetyl-L-alanyl-[protein] + CoA + H(+). It catalyses the reaction N-terminal L-seryl-[protein] + acetyl-CoA = N-terminal N(alpha)-acetyl-L-seryl-[protein] + CoA + H(+). The catalysed reaction is N-terminal L-valyl-[protein] + acetyl-CoA = N-terminal N(alpha)-acetyl-L-valyl-[protein] + CoA + H(+). It carries out the reaction N-terminal L-cysteinyl-[protein] + acetyl-CoA = N-terminal N(alpha)-acetyl-L-cysteinyl-[protein] + CoA + H(+). The enzyme catalyses N-terminal L-threonyl-[protein] + acetyl-CoA = N-terminal N(alpha)-acetyl-L-threonyl-[protein] + CoA + H(+). Catalytic component of the NatA N-terminal acetyltransferase, which catalyzes acetylation of proteins beginning with Met-Ser, Met-Gly and Met-Ala. N-acetylation plays a role in normal eukaryotic translation and processing, protect against proteolytic degradation and protein turnover. This Saccharomyces cerevisiae (strain ATCC 204508 / S288c) (Baker's yeast) protein is N-terminal acetyltransferase A complex catalytic subunit ARD1 (ARD1).